We begin with the raw amino-acid sequence, 300 residues long: Acetylglutamate kinase (300 aa).

Residues 69–70, arginine 91, and asparagine 197 each bind substrate; that span reads GG.

This sequence belongs to the acetylglutamate kinase family. ArgB subfamily.

The protein localises to the cytoplasm. The catalysed reaction is N-acetyl-L-glutamate + ATP = N-acetyl-L-glutamyl 5-phosphate + ADP. It functions in the pathway amino-acid biosynthesis; L-arginine biosynthesis; N(2)-acetyl-L-ornithine from L-glutamate: step 2/4. Catalyzes the ATP-dependent phosphorylation of N-acetyl-L-glutamate. The sequence is that of Acetylglutamate kinase from Kineococcus radiotolerans (strain ATCC BAA-149 / DSM 14245 / SRS30216).